A 168-amino-acid chain; its full sequence is MEVTNGLNLKDTELRLGLPGAQEEQQLELSCVRSNNKRKNNDSTEESAPPPAKTQIVGWPPVRSNRKNNNNKNVSYVKVSMDGAPYLRKIDLKMYKNYPELLKALENMFKFTVGEYSEREGYKGSGFVPTYEDKDGDWMLVGDVPWDMFSSSCQKLRIMKGSEAPTAL.

The disordered stretch occupies residues 1–74; sequence MEVTNGLNLK…NRKNNNNKNV (74 aa). Residues 14-18 carry the EAR-like (transcriptional repression) motif; that stretch reads LRLGL. Residues 23–34 are compositionally biased toward polar residues; sequence EEQQLELSCVRS. A PB1 domain is found at 74 to 161; the sequence is VSYVKVSMDG…SCQKLRIMKG (88 aa).

Belongs to the Aux/IAA family. As to quaternary structure, homodimers and heterodimers. Interacts with the auxin-responsive protein IAA2. Interacts with TPL. Post-translationally, phosphorylated by phytochrome A in vitro. Preferentially expressed in stems, leaves and flowers.

It localises to the nucleus. Aux/IAA proteins are short-lived transcriptional factors that function as repressors of early auxin response genes at low auxin concentrations. Repression is thought to result from the interaction with auxin response factors (ARFs), proteins that bind to the auxin-responsive promoter element (AuxRE). Formation of heterodimers with ARF proteins may alter their ability to modulate early auxin response genes expression. The sequence is that of Auxin-responsive protein IAA1 (IAA1) from Arabidopsis thaliana (Mouse-ear cress).